Here is a 255-residue protein sequence, read N- to C-terminus: Indole-3-glycerol phosphate synthase (255 aa).

It belongs to the TrpC family.

The enzyme catalyses 1-(2-carboxyphenylamino)-1-deoxy-D-ribulose 5-phosphate + H(+) = (1S,2R)-1-C-(indol-3-yl)glycerol 3-phosphate + CO2 + H2O. The protein operates within amino-acid biosynthesis; L-tryptophan biosynthesis; L-tryptophan from chorismate: step 4/5. The polypeptide is Indole-3-glycerol phosphate synthase (Streptococcus sanguinis (strain SK36)).